Reading from the N-terminus, the 693-residue chain is Tegument protein UL47 (693 aa).

Disordered stretches follow at residues 1–32 and 48–126; these read MSAREPAGRRRRASTRPRASPVADEPAGDGVG and ELEA…GYLG. Residues 48 to 57 are compositionally biased toward acidic residues; it reads ELEALEEMAG. An RNA-binding region spans residues 50–75; that stretch reads EALEEMAGDEPPVRRRREGPRARRRR. Residues 63-75 carry the Nuclear localization signal motif; the sequence is RRRREGPRARRRR. Over residues 63–75 the composition is skewed to basic residues; the sequence is RRRREGPRARRRR. Positions 647 to 670 match the Nuclear export signal motif; sequence SVLGPGVRVVDIMSQFRKLLMGDE.

This sequence belongs to the alphaherpesvirinae HHV-1 UL47 family. As to quaternary structure, interacts with US3 kinase. Interacts with UL31 and UL34; these interactions seem important for efficient virion nuclear egress. Interacts with UL41/VHS. In terms of processing, phosphorylated by US3. This phosphorylation is required for proper nuclear localization.

It is found in the virion tegument. It localises to the host nucleus. The protein localises to the host cytoplasm. Tegument protein that can bind to various RNA transcripts. Plays a role in the attenuation of selective viral and cellular mRNA degradation by modulating the activity of host shutoff RNase UL41/VHS. Also plays a role in the primary envelopment of virions in the perinuclear space, probably by interacting with two nuclear egress proteins UL31 and UL34. This is Tegument protein UL47 from Human herpesvirus 1 (strain F) (HHV-1).